We begin with the raw amino-acid sequence, 450 residues long: C4-dicarboxylate transport protein (450 aa).

The next 9 helical transmembrane spans lie at 10–30, 46–66, 78–98, 143–163, 190–210, 224–244, 291–311, 332–352, and 354–374; these read SLYF…HFYP, LIKM…IAGM, YALL…LIVV, IVGA…VIFG, IINM…AFTI, LMIC…GAIA, VVGL…SIYL, ITLL…TGSG, and IVLA…LALI. The segment at 428–450 is disordered; the sequence is PEDDLGVAEGPTPGAAVNTTKTV.

It belongs to the dicarboxylate/amino acid:cation symporter (DAACS) (TC 2.A.23) family.

The protein resides in the cell inner membrane. Its function is as follows. Responsible for the transport of dicarboxylates such as succinate, fumarate, and malate from the periplasm across the membrane. In Pseudomonas syringae pv. syringae (strain B728a), this protein is C4-dicarboxylate transport protein.